The following is a 190-amino-acid chain: Pyridoxal 5'-phosphate synthase subunit PdxT (190 aa).

46 to 48 (GES) lines the L-glutamine pocket. The Nucleophile role is filled by Cys-78. L-glutamine-binding positions include Arg-105 and 133-134 (IR). Active-site charge relay system residues include His-169 and Glu-171.

Belongs to the glutaminase PdxT/SNO family. In terms of assembly, in the presence of PdxS, forms a dodecamer of heterodimers. Only shows activity in the heterodimer.

It carries out the reaction aldehydo-D-ribose 5-phosphate + D-glyceraldehyde 3-phosphate + L-glutamine = pyridoxal 5'-phosphate + L-glutamate + phosphate + 3 H2O + H(+). The catalysed reaction is L-glutamine + H2O = L-glutamate + NH4(+). Its pathway is cofactor biosynthesis; pyridoxal 5'-phosphate biosynthesis. Functionally, catalyzes the hydrolysis of glutamine to glutamate and ammonia as part of the biosynthesis of pyridoxal 5'-phosphate. The resulting ammonia molecule is channeled to the active site of PdxS. The chain is Pyridoxal 5'-phosphate synthase subunit PdxT from Niallia circulans (Bacillus circulans).